Reading from the N-terminus, the 454-residue chain is UDP-N-acetylmuramoylalanine--D-glutamate ligase (454 aa).

115-121 provides a ligand contact to ATP; the sequence is GTNGKTT.

The protein belongs to the MurCDEF family.

It localises to the cytoplasm. The catalysed reaction is UDP-N-acetyl-alpha-D-muramoyl-L-alanine + D-glutamate + ATP = UDP-N-acetyl-alpha-D-muramoyl-L-alanyl-D-glutamate + ADP + phosphate + H(+). It participates in cell wall biogenesis; peptidoglycan biosynthesis. In terms of biological role, cell wall formation. Catalyzes the addition of glutamate to the nucleotide precursor UDP-N-acetylmuramoyl-L-alanine (UMA). The chain is UDP-N-acetylmuramoylalanine--D-glutamate ligase from Thermoanaerobacter sp. (strain X514).